The primary structure comprises 149 residues: D-aminoacyl-tRNA deacylase (149 aa).

Positions 137–138 (GP) match the Gly-cisPro motif, important for rejection of L-amino acids motif.

It belongs to the DTD family. As to quaternary structure, homodimer.

It is found in the cytoplasm. The catalysed reaction is glycyl-tRNA(Ala) + H2O = tRNA(Ala) + glycine + H(+). It catalyses the reaction a D-aminoacyl-tRNA + H2O = a tRNA + a D-alpha-amino acid + H(+). An aminoacyl-tRNA editing enzyme that deacylates mischarged D-aminoacyl-tRNAs. Also deacylates mischarged glycyl-tRNA(Ala), protecting cells against glycine mischarging by AlaRS. Acts via tRNA-based rather than protein-based catalysis; rejects L-amino acids rather than detecting D-amino acids in the active site. By recycling D-aminoacyl-tRNA to D-amino acids and free tRNA molecules, this enzyme counteracts the toxicity associated with the formation of D-aminoacyl-tRNA entities in vivo and helps enforce protein L-homochirality. This is D-aminoacyl-tRNA deacylase from Thioalkalivibrio sulfidiphilus (strain HL-EbGR7).